Consider the following 336-residue polypeptide: Succinylglutamate desuccinylase (336 aa).

3 residues coordinate Zn(2+): His-59, Glu-62, and His-151. Residue Glu-215 is part of the active site.

The protein belongs to the AspA/AstE family. Succinylglutamate desuccinylase subfamily. Requires Zn(2+) as cofactor.

It catalyses the reaction N-succinyl-L-glutamate + H2O = L-glutamate + succinate. It functions in the pathway amino-acid degradation; L-arginine degradation via AST pathway; L-glutamate and succinate from L-arginine: step 5/5. In terms of biological role, transforms N(2)-succinylglutamate into succinate and glutamate. The polypeptide is Succinylglutamate desuccinylase (Pseudomonas fluorescens (strain Pf0-1)).